A 159-amino-acid chain; its full sequence is Putative viral CXC chemokine 2 (159 aa).

2 disulfides stabilise this stretch: cysteine 50–cysteine 77 and cysteine 52–cysteine 93.

It belongs to the intercrine alpha (chemokine CxC) family.

The polypeptide is Putative viral CXC chemokine 2 (UL147) (Human cytomegalovirus (strain Towne) (HHV-5)).